The following is a 153-amino-acid chain: Putative transmembrane protein INAFM2 (153 aa).

The segment covering Met-1–Ala-23 has biased composition (basic and acidic residues). Residues Met-1–Lys-24 form a disordered region. A helical transmembrane segment spans residues Leu-36–Tyr-56. Residues Ala-66–Arg-153 are disordered. Low complexity predominate over residues Gly-79–Ser-101. Over residues Pro-118–Gly-131 the composition is skewed to pro residues.

Its subcellular location is the membrane. The polypeptide is Putative transmembrane protein INAFM2 (Homo sapiens (Human)).